Reading from the N-terminus, the 188-residue chain is ATP synthase subunit b (188 aa).

Residues 5-25 form a helical membrane-spanning segment; sequence MLLIFMMIVMIASSAMAAEAE.

This sequence belongs to the ATPase B chain family. As to quaternary structure, F-type ATPases have 2 components, F(1) - the catalytic core - and F(0) - the membrane proton channel. F(1) has five subunits: alpha(3), beta(3), gamma(1), delta(1), epsilon(1). F(0) has three main subunits: a(1), b(2) and c(10-14). The alpha and beta chains form an alternating ring which encloses part of the gamma chain. F(1) is attached to F(0) by a central stalk formed by the gamma and epsilon chains, while a peripheral stalk is formed by the delta and b chains.

The protein localises to the cell inner membrane. F(1)F(0) ATP synthase produces ATP from ADP in the presence of a proton or sodium gradient. F-type ATPases consist of two structural domains, F(1) containing the extramembraneous catalytic core and F(0) containing the membrane proton channel, linked together by a central stalk and a peripheral stalk. During catalysis, ATP synthesis in the catalytic domain of F(1) is coupled via a rotary mechanism of the central stalk subunits to proton translocation. Functionally, component of the F(0) channel, it forms part of the peripheral stalk, linking F(1) to F(0). In Thermodesulfovibrio yellowstonii (strain ATCC 51303 / DSM 11347 / YP87), this protein is ATP synthase subunit b.